Consider the following 67-residue polypeptide: DNA-directed RNA polymerases I, II, and III subunit RPABC5 (67 aa).

The Zn(2+) site is built by Cys-7, Cys-10, Cys-44, and Cys-45.

This sequence belongs to the archaeal Rpo10/eukaryotic RPB10 RNA polymerase subunit family. Component of the RNA polymerase I (Pol I), RNA polymerase II (Pol II) and RNA polymerase III (Pol III) complexes consisting of at least 13, 12 and 17 subunits, respectively.

The protein localises to the nucleus. Its function is as follows. DNA-dependent RNA polymerase catalyzes the transcription of DNA into RNA using the four ribonucleoside triphosphates as substrates. Common component of RNA polymerases I, II and III which synthesize ribosomal RNA precursors, mRNA precursors and many functional non-coding RNAs, and a small RNAs, such as 5S rRNA and tRNAs, respectively. Pol II is the central component of the basal RNA polymerase II transcription machinery. Pols are composed of mobile elements that move relative to each other. In Pol II, RBP10 is part of the core element with the central large cleft. This chain is DNA-directed RNA polymerases I, II, and III subunit RPABC5, found in Caenorhabditis briggsae.